We begin with the raw amino-acid sequence, 354 residues long: Histidinol-phosphate aminotransferase (354 aa).

Residue Lys-210 is modified to N6-(pyridoxal phosphate)lysine.

Belongs to the class-II pyridoxal-phosphate-dependent aminotransferase family. Histidinol-phosphate aminotransferase subfamily. Homodimer. Requires pyridoxal 5'-phosphate as cofactor.

It catalyses the reaction L-histidinol phosphate + 2-oxoglutarate = 3-(imidazol-4-yl)-2-oxopropyl phosphate + L-glutamate. The protein operates within amino-acid biosynthesis; L-histidine biosynthesis; L-histidine from 5-phospho-alpha-D-ribose 1-diphosphate: step 7/9. This chain is Histidinol-phosphate aminotransferase, found in Clostridium botulinum (strain ATCC 19397 / Type A).